A 465-amino-acid chain; its full sequence is Adenosylhomocysteinase (465 aa).

Substrate is bound by residues Thr-56, Asp-131, and Glu-191. Position 192–194 (192–194) interacts with NAD(+); the sequence is TTT. Residues Lys-221 and Asp-225 each contribute to the substrate site. Residues Asn-226, 255-260, Glu-278, Asn-313, 334-336, and Asn-379 contribute to the NAD(+) site; these read GYGDVG and IGH.

It belongs to the adenosylhomocysteinase family. The cofactor is NAD(+).

It is found in the cytoplasm. The catalysed reaction is S-adenosyl-L-homocysteine + H2O = L-homocysteine + adenosine. It participates in amino-acid biosynthesis; L-homocysteine biosynthesis; L-homocysteine from S-adenosyl-L-homocysteine: step 1/1. In terms of biological role, may play a key role in the regulation of the intracellular concentration of adenosylhomocysteine. This chain is Adenosylhomocysteinase, found in Chelativorans sp. (strain BNC1).